The primary structure comprises 480 residues: Proline--tRNA ligase (480 aa).

Belongs to the class-II aminoacyl-tRNA synthetase family. ProS type 3 subfamily. In terms of assembly, homodimer.

Its subcellular location is the cytoplasm. It carries out the reaction tRNA(Pro) + L-proline + ATP = L-prolyl-tRNA(Pro) + AMP + diphosphate. Functionally, catalyzes the attachment of proline to tRNA(Pro) in a two-step reaction: proline is first activated by ATP to form Pro-AMP and then transferred to the acceptor end of tRNA(Pro). The polypeptide is Proline--tRNA ligase (Alkaliphilus oremlandii (strain OhILAs) (Clostridium oremlandii (strain OhILAs))).